The primary structure comprises 635 residues: ATP-binding protein Uup (635 aa).

ABC transporter domains are found at residues 1-253 and 320-546; these read MSLI…RVEE and FEME…KTEE. Residues 36-43 and 352-359 contribute to the ATP site; these read GRNGAGKS and GPNGCGKT. The interval 551 to 635 is C-terminal domain (CTD), binds DNA, required to complement a deletion mutant; that stretch reads KAETVKRSSS…EYLEALKNGG (85 aa). Residues 563-631 are a coiled coil; sequence SYKLQRELEQ…FERWEYLEAL (69 aa).

The protein belongs to the ABC transporter superfamily. ABCF family. Uup subfamily.

It localises to the cytoplasm. The enzyme catalyses ATP + H2O = ADP + phosphate + H(+). ATPase activity inhibited by N-ethylmaleimide but not by vanadate. In terms of biological role, probably plays a role in ribosome assembly or function; overexpression suppresses cold-sensitive growth of a bipA deletion. May be involved in resolution of branched DNA intermediates that result from template switching in postreplication gaps. Binds DNA at Holliday junctions. May be involved in the correct segregation of nucleoids. Has ATPase activity, binds DNA non-sequence specifically; the presence of DNA does not change the ATPase activity. Mutations in this gene cause an increase in RecA-independent precise excision of transposons and insertion elements, and also reduce bacteriophage Mu growth. Genetic interactions among priB, dam, lexA, nagC, polA, rdgB, rdgB, rep and uup link the PriA-PriB replication restart pathway to DNA double-strand break repair. This is ATP-binding protein Uup from Escherichia coli (strain K12).